We begin with the raw amino-acid sequence, 80 residues long: CLAVATA3/ESR (CLE)-related protein 14 (80 aa).

Positions 1 to 26 (MKVWSQRLSFLIVMIFILAGLHSSSA) are cleaved as a signal peptide. A hydroxyproline mark is found at proline 71 and proline 74. Residue proline 74 is glycosylated (O-linked (Ara...) hydroxyproline).

This sequence belongs to the CLV3/ESR signal peptide family. As to quaternary structure, interacts with the extracellular leucine-rich repeat region of CLV2 and PEPR2. Post-translationally, the O-glycosylation (arabinosylation) of the hydroxyproline Pro-74 enhances binding affinity of the CLE14p peptide for its receptor. In terms of tissue distribution, mostly expressed in roots, and, to a lower extent, in seedlings and leaves. Expressed in the primary root tip under Pi deficiency.

Its subcellular location is the secreted. It localises to the extracellular space. Extracellular signal peptide that regulates cell fate. Represses root apical meristem maintenance. Acts as an elicitor of the root meristem differentiation through the CLV2/CRN complex signaling pathway. Inhibits irreversibly root growth by reducing cell division rates in the root apical meristem. Regulates the transition of protophloem cells from proliferation to differentiation, thus impinging on postembryonic growth capacity of the root meristem; this signaling pathway requires CRN and CLV2. The sequence is that of CLAVATA3/ESR (CLE)-related protein 14 from Arabidopsis thaliana (Mouse-ear cress).